A 316-amino-acid polypeptide reads, in one-letter code: 4-hydroxy-3-methylbut-2-enyl diphosphate reductase (316 aa).

Residue Cys12 participates in [4Fe-4S] cluster binding. Residues His41 and His74 each coordinate (2E)-4-hydroxy-3-methylbut-2-enyl diphosphate. Dimethylallyl diphosphate is bound by residues His41 and His74. Isopentenyl diphosphate is bound by residues His41 and His74. [4Fe-4S] cluster is bound at residue Cys96. Residue His124 coordinates (2E)-4-hydroxy-3-methylbut-2-enyl diphosphate. His124 provides a ligand contact to dimethylallyl diphosphate. His124 provides a ligand contact to isopentenyl diphosphate. The active-site Proton donor is the Glu126. A (2E)-4-hydroxy-3-methylbut-2-enyl diphosphate-binding site is contributed by Thr169. [4Fe-4S] cluster is bound at residue Cys199. Residues Ser227, Ser228, Asn229, and Ser271 each contribute to the (2E)-4-hydroxy-3-methylbut-2-enyl diphosphate site. Positions 227, 228, 229, and 271 each coordinate dimethylallyl diphosphate. The isopentenyl diphosphate site is built by Ser227, Ser228, Asn229, and Ser271.

The protein belongs to the IspH family. [4Fe-4S] cluster is required as a cofactor.

It catalyses the reaction isopentenyl diphosphate + 2 oxidized [2Fe-2S]-[ferredoxin] + H2O = (2E)-4-hydroxy-3-methylbut-2-enyl diphosphate + 2 reduced [2Fe-2S]-[ferredoxin] + 2 H(+). The enzyme catalyses dimethylallyl diphosphate + 2 oxidized [2Fe-2S]-[ferredoxin] + H2O = (2E)-4-hydroxy-3-methylbut-2-enyl diphosphate + 2 reduced [2Fe-2S]-[ferredoxin] + 2 H(+). It participates in isoprenoid biosynthesis; dimethylallyl diphosphate biosynthesis; dimethylallyl diphosphate from (2E)-4-hydroxy-3-methylbutenyl diphosphate: step 1/1. It functions in the pathway isoprenoid biosynthesis; isopentenyl diphosphate biosynthesis via DXP pathway; isopentenyl diphosphate from 1-deoxy-D-xylulose 5-phosphate: step 6/6. In terms of biological role, catalyzes the conversion of 1-hydroxy-2-methyl-2-(E)-butenyl 4-diphosphate (HMBPP) into a mixture of isopentenyl diphosphate (IPP) and dimethylallyl diphosphate (DMAPP). Acts in the terminal step of the DOXP/MEP pathway for isoprenoid precursor biosynthesis. The polypeptide is 4-hydroxy-3-methylbut-2-enyl diphosphate reductase (Xylella fastidiosa (strain M23)).